Reading from the N-terminus, the 140-residue chain is Small ribosomal subunit protein bS16 (140 aa).

A disordered region spans residues 86–140 (TVGKAKQAAKREEEAKQAAKEAAEAKAAAEAEAAAAAEAAKAEDAPDGETESSEG). The segment covering 94-114 (AKREEEAKQAAKEAAEAKAAA) has biased composition (basic and acidic residues). The span at 115 to 124 (EAEAAAAAEA) shows a compositional bias: low complexity. A compositionally biased stretch (acidic residues) spans 130-140 (APDGETESSEG).

Belongs to the bacterial ribosomal protein bS16 family.

The sequence is that of Small ribosomal subunit protein bS16 from Parasynechococcus marenigrum (strain WH8102).